The sequence spans 490 residues: Aspartyl/glutamyl-tRNA(Asn/Gln) amidotransferase subunit B (490 aa).

This sequence belongs to the GatB/GatE family. GatB subfamily. As to quaternary structure, heterotrimer of A, B and C subunits.

It carries out the reaction L-glutamyl-tRNA(Gln) + L-glutamine + ATP + H2O = L-glutaminyl-tRNA(Gln) + L-glutamate + ADP + phosphate + H(+). The enzyme catalyses L-aspartyl-tRNA(Asn) + L-glutamine + ATP + H2O = L-asparaginyl-tRNA(Asn) + L-glutamate + ADP + phosphate + 2 H(+). Its function is as follows. Allows the formation of correctly charged Asn-tRNA(Asn) or Gln-tRNA(Gln) through the transamidation of misacylated Asp-tRNA(Asn) or Glu-tRNA(Gln) in organisms which lack either or both of asparaginyl-tRNA or glutaminyl-tRNA synthetases. The reaction takes place in the presence of glutamine and ATP through an activated phospho-Asp-tRNA(Asn) or phospho-Glu-tRNA(Gln). The sequence is that of Aspartyl/glutamyl-tRNA(Asn/Gln) amidotransferase subunit B from Burkholderia pseudomallei (strain K96243).